The following is a 483-amino-acid chain: General transcription factor IIH subunit 4 (483 aa).

The segment at 93–117 (PQQQQSSQQSSSQQQQQQQQQQQQT) is disordered. Over residues 94–116 (QQQQSSQQSSSQQQQQQQQQQQQ) the composition is skewed to low complexity.

The protein belongs to the TFB2 family. Component of the 7-subunit TFIIH core complex composed of XPB/repB, XPD/repD, gtf2h1, gtf2h2, gtf2h3, gtf2h4 and gtf2h5, which is active in NER. The core complex associates with the 3-subunit CDK-activating kinase (CAK) module composed of cycH/cyclin H, cdk7 and mnat1 to form the 10-subunit holoenzyme (holo-TFIIH) active in transcription.

It is found in the nucleus. Component of the general transcription and DNA repair factor IIH (TFIIH) core complex, which is involved in general and transcription-coupled nucleotide excision repair (NER) of damaged DNA and, when complexed to CAK, in RNA transcription by RNA polymerase II. In NER, TFIIH acts by opening DNA around the lesion to allow the excision of the damaged oligonucleotide and its replacement by a new DNA fragment. In transcription, TFIIH has an essential role in transcription initiation. When the pre-initiation complex (PIC) has been established, TFIIH is required for promoter opening and promoter escape. Phosphorylation of the C-terminal tail (CTD) of the largest subunit of RNA polymerase II by the kinase module CAK controls the initiation of transcription. This is General transcription factor IIH subunit 4 (gtf2h4) from Dictyostelium discoideum (Social amoeba).